The primary structure comprises 146 residues: 3-dehydroquinate dehydratase (146 aa).

Catalysis depends on Tyr-23, which acts as the Proton acceptor. Substrate-binding residues include Asn-74, His-80, and Asp-87. His-100 serves as the catalytic Proton donor. Substrate contacts are provided by residues Ile-101–Ser-102 and Arg-111.

This sequence belongs to the type-II 3-dehydroquinase family. As to quaternary structure, homododecamer.

It catalyses the reaction 3-dehydroquinate = 3-dehydroshikimate + H2O. It functions in the pathway metabolic intermediate biosynthesis; chorismate biosynthesis; chorismate from D-erythrose 4-phosphate and phosphoenolpyruvate: step 3/7. In terms of biological role, catalyzes a trans-dehydration via an enolate intermediate. This chain is 3-dehydroquinate dehydratase, found in Bacillus cereus (strain B4264).